The primary structure comprises 506 residues: MISDFPLLTFITLFPISAGLLIPFLDKKGNQLVRWYTLIICLIDFVITSYIFIYKYDLNIDTLQLIDDYAWVGPIEFHWKLGVDGLSMPLILLTSFITTLATLSAWPITRNSRLFYFLMLAMYSGQLGVFLSQDILLFFLMWELELIPIYLLLSLWGGKRRLYAATKFILYTAVGSIFILMAGLTMAFYNSNVPLLDFQSLANKQYPLALEIVLYLGFLIAFAVKLPAFPLHTWLPDTHGEAHYSTCMLLAGILIKMGGYGLIRINMELLPNAHVIFSPWIALIGGIQIIYGALTSLGQRNLKRRIAYSSISHMGFVMIGISSFTDLGLSGAMMQMVSHGLIGAGLFFLAGTSYDRIRTLFLDQMGGISTTMPKIFAMFTTCALASLALPGMSGFVAELMVFLGFLKSNAYSFDFIALITFLEAVGIILTPIYLLSMLRQMFYGYRKLKLTNTLLLDASPREIFIMSCLFLPIIGIGIYPNLTIPLWNTKVEAIEQLNVFKSVGFK.

The next 14 membrane-spanning stretches (helical) occupy residues 5–25, 35–55, 88–108, 114–134, 135–155, 168–188, 209–229, 243–263, 275–295, 309–329, 331–351, 386–406, 415–435, and 463–483; these read FPLLTFITLFPISAGLLIPFL, WYTLIICLIDFVITSYIFIYK, MPLILLTSFITTLATLSAWPI, LFYFLMLAMYSGQLGVFLSQD, ILLFFLMWELELIPIYLLLSL, FILYTAVGSIFILMAGLTMAF, ALEIVLYLGFLIAFAVKLPAF, HYSTCMLLAGILIKMGGYGLI, VIFSPWIALIGGIQIIYGALT, SSISHMGFVMIGISSFTDLGL, GAMMQMVSHGLIGAGLFFLAG, SLALPGMSGFVAELMVFLGFL, FIALITFLEAVGIILTPIYLL, and IFIMSCLFLPIIGIGIYPNLT.

The protein belongs to the complex I subunit 4 family.

The protein resides in the plastid. Its subcellular location is the chloroplast thylakoid membrane. It carries out the reaction a plastoquinone + NADH + (n+1) H(+)(in) = a plastoquinol + NAD(+) + n H(+)(out). The catalysed reaction is a plastoquinone + NADPH + (n+1) H(+)(in) = a plastoquinol + NADP(+) + n H(+)(out). This chain is NAD(P)H-quinone oxidoreductase chain 4, chloroplastic, found in Chaetosphaeridium globosum (Charophycean green alga).